We begin with the raw amino-acid sequence, 518 residues long: MSAYSRRYTDGPSNYGQDVRGRSEKKVEASHTTKWSGTPSRHKKIGKEDFDTIVTGHLTQEQMDAYQQYFRIEEISDILRMASESQSEVLSLLPSGNIANNPNYEREPSPPPKYDAAGNRSNTREARTKLALEKERHYLVEVAAGSIKNYMSPIDYRKPVKTYEKIYIPVKDYPDINFVGLLLGPRGNTLRQLQEDSGARLAIRGKGSVKDGKSTSSNNDDDDSNSSLSFSNPNLNSSGNDDLHVVITSDSQSKIAKAIKLTNQVIEKAISSPVGQNDLKRGQLRELAILNGTLRETKPYNPETQQSRRSRPGLDVSQLVCKSCGKVGHFARDCKFRGTSDGNNNPIVQDQADSYQQTAPYSDSRRQREEEDPRNNGREEILPPWKKKKPNVPLPPWQKPQQPLPSTDAPPPPVGLAPPPSSLAPPPPPPSSLAPPPPPPPSSLAPPPPPSSDIAPPPPSSDRAPPPPPSGIAPPPPPSGIAPPPPKSPNGVAPPPPPANDAPPAPSSTKNPPPPPPA.

Disordered regions lie at residues 1 to 47 (MSAY…KIGK), 94 to 124 (PSGN…SNTR), 202 to 241 (AIRG…SGND), and 295 to 314 (RETK…RPGL). The span at 19-31 (VRGRSEKKVEASH) shows a compositional bias: basic and acidic residues. The 67-residue stretch at 167-233 (YIPVKDYPDI…SNSSLSFSNP (67 aa)) folds into the KH domain. The span at 225-240 (NSSLSFSNPNLNSSGN) shows a compositional bias: low complexity. The CCHC-type zinc-finger motif lies at 319-336 (LVCKSCGKVGHFARDCKF). The disordered stretch occupies residues 337–518 (RGTSDGNNNP…TKNPPPPPPA (182 aa)). Positions 340–361 (SDGNNNPIVQDQADSYQQTAPY) are enriched in polar residues. The segment covering 363 to 381 (DSRRQREEEDPRNNGREEI) has biased composition (basic and acidic residues). The segment covering 408 to 518 (DAPPPPVGLA…TKNPPPPPPA (111 aa)) has biased composition (pro residues).

It belongs to the BBP/SF1 family.

It localises to the nucleus. Necessary for the splicing of pre-mRNA. Has a role in the recognition of the branch site (5'-UACUAAC-3'), the pyrimidine tract and the 3'-splice site at the 3'-end of introns. This Debaryomyces hansenii (strain ATCC 36239 / CBS 767 / BCRC 21394 / JCM 1990 / NBRC 0083 / IGC 2968) (Yeast) protein is Branchpoint-bridging protein (BBP).